Consider the following 200-residue polypeptide: Small ribosomal subunit protein mS26 (200 aa).

The N-terminal 27 residues, Met-1–Arg-27, are a transit peptide targeting the mitochondrion. Residues Met-1–Thr-44 are disordered. Lys-159 carries the post-translational modification N6-acetyllysine.

Belongs to the mitochondrion-specific ribosomal protein mS26 family. In terms of assembly, component of the mitochondrial ribosome small subunit (28S) which comprises a 12S rRNA and about 30 distinct proteins.

It is found in the mitochondrion. The protein is Small ribosomal subunit protein mS26 (Mrps26) of Mus musculus (Mouse).